The following is a 186-amino-acid chain: UPF0157 protein SCO7215 (186 aa).

It belongs to the UPF0157 (GrpB) family.

This is UPF0157 protein SCO7215 from Streptomyces coelicolor (strain ATCC BAA-471 / A3(2) / M145).